Consider the following 148-residue polypeptide: Small ribosomal subunit protein uS9 (148 aa).

This sequence belongs to the universal ribosomal protein uS9 family.

The protein is Small ribosomal subunit protein uS9 (RpS16) of Drosophila melanogaster (Fruit fly).